The sequence spans 656 residues: Macrolide export ATP-binding/permease protein MacB (656 aa).

The 239-residue stretch at 6–244 (LEVSACYRSF…VKAQVDMSLA (239 aa)) folds into the ABC transporter domain. ATP is bound at residue 42-49 (GASGSGKS). Helical transmembrane passes span 277–297 (FLTM…VALG), 531–551 (LLIS…VMNI), 586–606 (LVCL…GVVF), and 621–641 (SIVA…FLPA).

The protein belongs to the ABC transporter superfamily. Macrolide exporter (TC 3.A.1.122) family. In terms of assembly, homodimer. Part of the tripartite efflux system MacAB-TolC, which is composed of an inner membrane transporter, MacB, a periplasmic membrane fusion protein, MacA, and an outer membrane component, TolC. The complex forms a large protein conduit and can translocate molecules across both the inner and outer membranes. Interacts with MacA.

It localises to the cell inner membrane. In terms of biological role, part of the tripartite efflux system MacAB-TolC. MacB is a non-canonical ABC transporter that contains transmembrane domains (TMD), which form a pore in the inner membrane, and an ATP-binding domain (NBD), which is responsible for energy generation. Confers resistance against macrolides. The sequence is that of Macrolide export ATP-binding/permease protein MacB from Shewanella oneidensis (strain ATCC 700550 / JCM 31522 / CIP 106686 / LMG 19005 / NCIMB 14063 / MR-1).